The sequence spans 526 residues: ATP synthase subunit alpha (526 aa).

ATP is bound at residue 171 to 178 (GDRQTGKT).

Belongs to the ATPase alpha/beta chains family. In terms of assembly, F-type ATPases have 2 components, CF(1) - the catalytic core - and CF(0) - the membrane proton channel. CF(1) has five subunits: alpha(3), beta(3), gamma(1), delta(1), epsilon(1). CF(0) has three main subunits: a(1), b(2) and c(9-12). The alpha and beta chains form an alternating ring which encloses part of the gamma chain. CF(1) is attached to CF(0) by a central stalk formed by the gamma and epsilon chains, while a peripheral stalk is formed by the delta and b chains.

The protein localises to the cell membrane. It catalyses the reaction ATP + H2O + 4 H(+)(in) = ADP + phosphate + 5 H(+)(out). Functionally, produces ATP from ADP in the presence of a proton gradient across the membrane. The alpha chain is a regulatory subunit. The sequence is that of ATP synthase subunit alpha from Christiangramia forsetii (strain DSM 17595 / CGMCC 1.15422 / KT0803) (Gramella forsetii).